Reading from the N-terminus, the 488-residue chain is Glutamyl-tRNA(Gln) amidotransferase subunit A (488 aa).

Active-site charge relay system residues include K77 and S152. S176 (acyl-ester intermediate) is an active-site residue.

It belongs to the amidase family. GatA subfamily. Heterotrimer of A, B and C subunits.

It carries out the reaction L-glutamyl-tRNA(Gln) + L-glutamine + ATP + H2O = L-glutaminyl-tRNA(Gln) + L-glutamate + ADP + phosphate + H(+). Functionally, allows the formation of correctly charged Gln-tRNA(Gln) through the transamidation of misacylated Glu-tRNA(Gln) in organisms which lack glutaminyl-tRNA synthetase. The reaction takes place in the presence of glutamine and ATP through an activated gamma-phospho-Glu-tRNA(Gln). The sequence is that of Glutamyl-tRNA(Gln) amidotransferase subunit A from Streptococcus pyogenes serotype M49 (strain NZ131).